The sequence spans 253 residues: Tropomyosin-1 (253 aa).

Residues 7 to 253 are a coiled coil; it reads VNKLVRLQGK…MDDVGDDDTQ (247 aa).

Belongs to the tropomyosin family. Homodimer.

Its function is as follows. Tropomyosin, in association with the troponin complex, plays a central role in the calcium dependent regulation of muscle contraction. The protein is Tropomyosin-1 (TROP1) of Hydra vulgaris (Hydra).